The following is a 443-amino-acid chain: Threonine/serine transporter TdcC (443 aa).

A run of 11 helical transmembrane segments spans residues 24-44 (WVLG…PISA), 45-65 (GIGG…IAFF), 95-115 (VGGV…LWIY), 140-160 (VVAL…KDLM), 163-183 (VMGY…LSLI), 207-227 (ILVT…FSPI), 259-279 (ASVL…FTLS), 319-339 (ASII…LGTL), 363-383 (LNMI…YINP), 385-405 (ILDL…CLLP), and 423-443 (SNYF…YQLM).

It belongs to the amino acid/polyamine transporter 2 family. SdaC/TdcC subfamily.

Its subcellular location is the cell inner membrane. It carries out the reaction L-threonine(in) + H(+)(in) = L-threonine(out) + H(+)(out). The catalysed reaction is L-serine(in) + H(+)(in) = L-serine(out) + H(+)(out). Its function is as follows. Involved in the import of threonine and serine into the cell, with the concomitant import of a proton (symport system). The polypeptide is Threonine/serine transporter TdcC (Edwardsiella tarda).